An 82-amino-acid chain; its full sequence is UPF0291 protein LVIS_1359 (82 aa).

The protein belongs to the UPF0291 family.

It is found in the cytoplasm. The sequence is that of UPF0291 protein LVIS_1359 from Levilactobacillus brevis (strain ATCC 367 / BCRC 12310 / CIP 105137 / JCM 1170 / LMG 11437 / NCIMB 947 / NCTC 947) (Lactobacillus brevis).